Reading from the N-terminus, the 426-residue chain is Glutamate-1-semialdehyde 2,1-aminomutase (426 aa).

Lys265 carries the N6-(pyridoxal phosphate)lysine modification.

Belongs to the class-III pyridoxal-phosphate-dependent aminotransferase family. HemL subfamily. As to quaternary structure, homodimer. Pyridoxal 5'-phosphate is required as a cofactor.

The protein localises to the cytoplasm. It carries out the reaction (S)-4-amino-5-oxopentanoate = 5-aminolevulinate. Its pathway is porphyrin-containing compound metabolism; protoporphyrin-IX biosynthesis; 5-aminolevulinate from L-glutamyl-tRNA(Glu): step 2/2. In Escherichia coli O127:H6 (strain E2348/69 / EPEC), this protein is Glutamate-1-semialdehyde 2,1-aminomutase.